Here is a 423-residue protein sequence, read N- to C-terminus: Serine--tRNA ligase (423 aa).

Residue 230–232 (TAE) participates in L-serine binding. Residue 261-263 (RSE) coordinates ATP. Position 284 (Glu284) interacts with L-serine. Residue 348-351 (EISS) coordinates ATP. Ser384 lines the L-serine pocket.

It belongs to the class-II aminoacyl-tRNA synthetase family. Type-1 seryl-tRNA synthetase subfamily. In terms of assembly, homodimer. The tRNA molecule binds across the dimer.

The protein localises to the cytoplasm. The enzyme catalyses tRNA(Ser) + L-serine + ATP = L-seryl-tRNA(Ser) + AMP + diphosphate + H(+). It catalyses the reaction tRNA(Sec) + L-serine + ATP = L-seryl-tRNA(Sec) + AMP + diphosphate + H(+). The protein operates within aminoacyl-tRNA biosynthesis; selenocysteinyl-tRNA(Sec) biosynthesis; L-seryl-tRNA(Sec) from L-serine and tRNA(Sec): step 1/1. Functionally, catalyzes the attachment of serine to tRNA(Ser). Is also able to aminoacylate tRNA(Sec) with serine, to form the misacylated tRNA L-seryl-tRNA(Sec), which will be further converted into selenocysteinyl-tRNA(Sec). The chain is Serine--tRNA ligase from Syntrophobacter fumaroxidans (strain DSM 10017 / MPOB).